Reading from the N-terminus, the 523-residue chain is Probable lipid II flippase MurJ (523 aa).

Transmembrane regions (helical) follow at residues 98–118 (AFYS…IVYV), 146–166 (IMFG…ILNA), 170–190 (FGLP…FTFM), 201–221 (GLAW…AVAL), 246–266 (MLPG…NLYF), 284–304 (LLEL…LPTL), 328–348 (LFLA…IIEV), 360–380 (VQMT…VSCS), 395–415 (VPMV…PVLM), 422–442 (GLMI…MGLL), 461–481 (FVLA…LMAQ), and 489–509 (LALF…AYVL).

This sequence belongs to the MurJ/MviN family.

It localises to the cell inner membrane. It participates in cell wall biogenesis; peptidoglycan biosynthesis. Functionally, involved in peptidoglycan biosynthesis. Transports lipid-linked peptidoglycan precursors from the inner to the outer leaflet of the cytoplasmic membrane. This chain is Probable lipid II flippase MurJ, found in Bdellovibrio bacteriovorus (strain ATCC 15356 / DSM 50701 / NCIMB 9529 / HD100).